Reading from the N-terminus, the 359-residue chain is 3-dehydroquinate synthase (359 aa).

NAD(+) is bound by residues 72-77 (EGEEHK), 106-110 (GVVGD), 130-131 (TT), lysine 143, lysine 152, and 170-173 (TLTT). Glutamate 185, histidine 248, and histidine 265 together coordinate Zn(2+).

This sequence belongs to the sugar phosphate cyclases superfamily. Dehydroquinate synthase family. It depends on Co(2+) as a cofactor. The cofactor is Zn(2+). Requires NAD(+) as cofactor.

The protein localises to the cytoplasm. The enzyme catalyses 7-phospho-2-dehydro-3-deoxy-D-arabino-heptonate = 3-dehydroquinate + phosphate. It participates in metabolic intermediate biosynthesis; chorismate biosynthesis; chorismate from D-erythrose 4-phosphate and phosphoenolpyruvate: step 2/7. Its function is as follows. Catalyzes the conversion of 3-deoxy-D-arabino-heptulosonate 7-phosphate (DAHP) to dehydroquinate (DHQ). This chain is 3-dehydroquinate synthase, found in Pelobacter propionicus (strain DSM 2379 / NBRC 103807 / OttBd1).